The chain runs to 158 residues: N-alpha-acetyltransferase RimI (158 aa).

Residues 8 to 155 (VTIGALTRAD…DAYTMRRDSG (148 aa)) enclose the N-acetyltransferase domain.

This sequence belongs to the acetyltransferase family. RimI subfamily. As to quaternary structure, monomer. Interacts with TsaD. Interacts with GroS/GroES.

The enzyme catalyses N-terminal L-methionyl-L-alanyl-[protein] + acetyl-CoA = N-terminal N(alpha)-acetyl-L-methionyl-L-alanyl-[protein] + CoA + H(+). It carries out the reaction N-terminal L-methionyl-L-seryl-[protein] + acetyl-CoA = N-terminal N(alpha)-acetyl-L-methionyl-L-seryl-[protein] + CoA + H(+). It catalyses the reaction N-terminal L-methionyl-L-valyl-[protein] + acetyl-CoA = N-terminal N(alpha)-acetyl-L-methionyl-L-valyl-[protein] + CoA + H(+). The catalysed reaction is N-terminal L-methionyl-L-threonyl-[protein] + acetyl-CoA = N-terminal N(alpha)-acetyl-L-methionyl-L-threonyl-[protein] + CoA + H(+). The enzyme catalyses N-terminal L-methionyl-L-lysyl-[protein] + acetyl-CoA = N-terminal N(alpha)-acetyl-L-methionyl-L-lysyl-[protein] + CoA + H(+). It carries out the reaction N-terminal L-methionyl-L-leucyl-[protein] + acetyl-CoA = N-terminal N(alpha)-acetyl-L-methionyl-L-leucyl-[protein] + CoA + H(+). It catalyses the reaction N-terminal L-methionyl-L-phenylalanyl-[protein] + acetyl-CoA = N-terminal N(alpha)-acetyl-L-methionyl-L-phenylalanyl-[protein] + CoA + H(+). The catalysed reaction is N-terminal L-methionyl-L-tyrosyl-[protein] + acetyl-CoA = N-terminal N(alpha)-acetyl-L-methionyl-L-tyrosyl-[protein] + CoA + H(+). The enzyme catalyses N-terminal glycyl-[protein] + acetyl-CoA = N-terminal N(alpha)-acetylglycyl-[protein] + CoA + H(+). It carries out the reaction N-terminal L-alanyl-[protein] + acetyl-CoA = N-terminal N(alpha)-acetyl-L-alanyl-[protein] + CoA + H(+). It catalyses the reaction N-terminal L-seryl-[protein] + acetyl-CoA = N-terminal N(alpha)-acetyl-L-seryl-[protein] + CoA + H(+). The catalysed reaction is N-terminal L-valyl-[protein] + acetyl-CoA = N-terminal N(alpha)-acetyl-L-valyl-[protein] + CoA + H(+). The enzyme catalyses N-terminal L-cysteinyl-[protein] + acetyl-CoA = N-terminal N(alpha)-acetyl-L-cysteinyl-[protein] + CoA + H(+). It carries out the reaction N-terminal L-threonyl-[protein] + acetyl-CoA = N-terminal N(alpha)-acetyl-L-threonyl-[protein] + CoA + H(+). Its function is as follows. N-alpha-acetyltransferase that specifically mediates the acetylation of N-terminal residues. Able to mediate acetylation of a wide variety of N-terminal residues, with preference for hydrophobic N-termini. Acetylates GroS/GroES and GroEL1. Able to acetylate the ribosomal protein bS18, but it is unclear whether it acetylates its N-terminal alanine residue. This Mycobacterium tuberculosis (strain ATCC 25618 / H37Rv) protein is N-alpha-acetyltransferase RimI.